We begin with the raw amino-acid sequence, 200 residues long: Probable GTP-binding protein EngB (200 aa).

In terms of domain architecture, EngB-type G spans 22–199 (NVAEVAFLGR…QDKITGYLFG (178 aa)). Residues 30-37 (GRSNVGKS), 57-61 (GKTQL), 85-88 (DLPG), 155-158 (TKID), and 177-180 (FLSN) contribute to the GTP site. 2 residues coordinate Mg(2+): serine 37 and threonine 59.

It belongs to the TRAFAC class TrmE-Era-EngA-EngB-Septin-like GTPase superfamily. EngB GTPase family. Mg(2+) serves as cofactor.

In terms of biological role, necessary for normal cell division and for the maintenance of normal septation. The polypeptide is Probable GTP-binding protein EngB (Aliarcobacter butzleri (strain RM4018) (Arcobacter butzleri)).